The sequence spans 226 residues: Thiamine-phosphate synthase (226 aa).

Residues 46-50 and aspartate 83 contribute to the 4-amino-2-methyl-5-(diphosphooxymethyl)pyrimidine site; that span reads QFRDK. Mg(2+)-binding residues include aspartate 84 and aspartate 103. Serine 122 is a binding site for 4-amino-2-methyl-5-(diphosphooxymethyl)pyrimidine. A 2-[(2R,5Z)-2-carboxy-4-methylthiazol-5(2H)-ylidene]ethyl phosphate-binding site is contributed by 149–151; sequence TQS. Lysine 152 is a binding site for 4-amino-2-methyl-5-(diphosphooxymethyl)pyrimidine. 2-[(2R,5Z)-2-carboxy-4-methylthiazol-5(2H)-ylidene]ethyl phosphate-binding positions include glycine 181 and 201-202; that span reads IT.

This sequence belongs to the thiamine-phosphate synthase family. The cofactor is Mg(2+).

It carries out the reaction 2-[(2R,5Z)-2-carboxy-4-methylthiazol-5(2H)-ylidene]ethyl phosphate + 4-amino-2-methyl-5-(diphosphooxymethyl)pyrimidine + 2 H(+) = thiamine phosphate + CO2 + diphosphate. It catalyses the reaction 2-(2-carboxy-4-methylthiazol-5-yl)ethyl phosphate + 4-amino-2-methyl-5-(diphosphooxymethyl)pyrimidine + 2 H(+) = thiamine phosphate + CO2 + diphosphate. The enzyme catalyses 4-methyl-5-(2-phosphooxyethyl)-thiazole + 4-amino-2-methyl-5-(diphosphooxymethyl)pyrimidine + H(+) = thiamine phosphate + diphosphate. It functions in the pathway cofactor biosynthesis; thiamine diphosphate biosynthesis; thiamine phosphate from 4-amino-2-methyl-5-diphosphomethylpyrimidine and 4-methyl-5-(2-phosphoethyl)-thiazole: step 1/1. Condenses 4-methyl-5-(beta-hydroxyethyl)thiazole monophosphate (THZ-P) and 2-methyl-4-amino-5-hydroxymethyl pyrimidine pyrophosphate (HMP-PP) to form thiamine monophosphate (TMP). This chain is Thiamine-phosphate synthase, found in Haemophilus influenzae (strain 86-028NP).